Reading from the N-terminus, the 217-residue chain is Protein GrpE (217 aa).

A disordered region spans residues 1-63 (MAETSNSENK…AADSELSLQS (63 aa)). The span at 10-32 (KTSEEAKASEKNSRSITLEETKL) shows a compositional bias: basic and acidic residues. Low complexity predominate over residues 37 to 63 (SEESTQTTESTQAQAAEAADSELSLQS).

It belongs to the GrpE family. Homodimer.

It is found in the cytoplasm. Participates actively in the response to hyperosmotic and heat shock by preventing the aggregation of stress-denatured proteins, in association with DnaK and GrpE. It is the nucleotide exchange factor for DnaK and may function as a thermosensor. Unfolded proteins bind initially to DnaJ; upon interaction with the DnaJ-bound protein, DnaK hydrolyzes its bound ATP, resulting in the formation of a stable complex. GrpE releases ADP from DnaK; ATP binding to DnaK triggers the release of the substrate protein, thus completing the reaction cycle. Several rounds of ATP-dependent interactions between DnaJ, DnaK and GrpE are required for fully efficient folding. This Leptospira borgpetersenii serovar Hardjo-bovis (strain JB197) protein is Protein GrpE.